Consider the following 384-residue polypeptide: MLRYLSAGESHGKGLIAIIEGLPSNIPMDINRINADLGRRQQGFGRGNRMKIEKDRVEILSGVRDGKTLGTPLTLMIENLDYKNWTSIMSVEKLEKQNIIVEPRPGHGDLVGSLKYNHKDIRNVIERTSARDTAIRTAIGAVVKQFLSIFDIEILSHVISIGRAHYVPFVEDLFQYKSQIEASPVRCLNPTIEERMMGEIQRAKETGDSLGGVFEVIVRNVPIGIGSYAHFDRKLDGILAQGLMSLQAIKAVEIGNGIEGSSKMGSQFHDEIKYSEAKGYYHDTNRAGGIEAGVSNGEDILIRGYMKPIPTLMKPLKTVDMGTKEVKEAIIERSDNCAVPSAAVVAEGICAFAIAKEFLEKFRGDSIEEVEWNYERYMNYLRSR.

NADP(+) is bound by residues Arg-40 and Arg-46. Residues 127 to 129, 247 to 248, Ala-292, 307 to 311, and Arg-333 each bind FMN; these read RTS, QA, and KPIPT.

Belongs to the chorismate synthase family. Homotetramer. The cofactor is FMNH2.

The catalysed reaction is 5-O-(1-carboxyvinyl)-3-phosphoshikimate = chorismate + phosphate. It functions in the pathway metabolic intermediate biosynthesis; chorismate biosynthesis; chorismate from D-erythrose 4-phosphate and phosphoenolpyruvate: step 7/7. Catalyzes the anti-1,4-elimination of the C-3 phosphate and the C-6 proR hydrogen from 5-enolpyruvylshikimate-3-phosphate (EPSP) to yield chorismate, which is the branch point compound that serves as the starting substrate for the three terminal pathways of aromatic amino acid biosynthesis. This reaction introduces a second double bond into the aromatic ring system. This is Chorismate synthase from Alkaliphilus oremlandii (strain OhILAs) (Clostridium oremlandii (strain OhILAs)).